Here is a 418-residue protein sequence, read N- to C-terminus: Tyrosine--tRNA ligase 1 (418 aa).

Y34 serves as a coordination point for L-tyrosine. The short motif at 39–48 (PTADSLHLGH) is the 'HIGH' region element. L-tyrosine contacts are provided by Y169 and Q173. The 'KMSKS' region motif lies at 229–233 (KFGKS). An ATP-binding site is contributed by K232. The S4 RNA-binding domain maps to 352 to 418 (LNIVELLVNA…GKKKNFVLTY (67 aa)).

This sequence belongs to the class-I aminoacyl-tRNA synthetase family. TyrS type 1 subfamily. In terms of assembly, homodimer.

The protein resides in the cytoplasm. The enzyme catalyses tRNA(Tyr) + L-tyrosine + ATP = L-tyrosyl-tRNA(Tyr) + AMP + diphosphate + H(+). Its function is as follows. Catalyzes the attachment of tyrosine to tRNA(Tyr) in a two-step reaction: tyrosine is first activated by ATP to form Tyr-AMP and then transferred to the acceptor end of tRNA(Tyr). This chain is Tyrosine--tRNA ligase 1, found in Streptococcus thermophilus (strain CNRZ 1066).